Here is a 136-residue protein sequence, read N- to C-terminus: Large ribosomal subunit protein uL16 (136 aa).

The protein belongs to the universal ribosomal protein uL16 family. In terms of assembly, part of the 50S ribosomal subunit.

Binds 23S rRNA and is also seen to make contacts with the A and possibly P site tRNAs. This is Large ribosomal subunit protein uL16 from Aggregatibacter actinomycetemcomitans (Actinobacillus actinomycetemcomitans).